Reading from the N-terminus, the 463-residue chain is Argininosuccinate lyase (463 aa).

It belongs to the lyase 1 family. Argininosuccinate lyase subfamily.

The protein localises to the cytoplasm. The catalysed reaction is 2-(N(omega)-L-arginino)succinate = fumarate + L-arginine. The protein operates within amino-acid biosynthesis; L-arginine biosynthesis; L-arginine from L-ornithine and carbamoyl phosphate: step 3/3. The protein is Argininosuccinate lyase of Prochlorococcus marinus (strain NATL2A).